The primary structure comprises 1261 residues: MPIDAESEAELRSEAEAPPGGFGKLMRVFTFATAVDRLIQIGCAFAAVCSGAAMPLMALILGRLTANFTDYGSSGDDKSTAEFMKSVQTNALWFVYLFIGKFTLVYLWSFGFTFTASRMLQAMRLTCLDRILDRTVAANDEETPGSLSNTVTSQCNSIQAALSDRLGIMIQAFSMLLASFAVAFSQSWQLTLVMLGLVIITLGLIGFIVSSDQKIEAGLLKRYAECSIIAEDALGSIRTVIAFGAAHKFLAKYNEILKKTETDGKKKGPFVGLMFACQYFFMFVGWAIGFYLGAYLFTKGMISDPGRILSVFFAMLIGLGAIMALGPNMPSFIKAIAAADVAFKILDDGTDQNQDSESQKDASQPEKIACQGHVELRDMSFAYRGREDRNALDKINLSFERGTSTAIVGPSGAGKSTLISLLERWYEPTAGSIFLDGNDIFQLDPKWLRSQIALVQQEPQLFNASIFDNIAYGLIGTEQENLSPEDKQTLVHDACRHARAYEFITKLPESFDTMVGDRASLISGGQKQRIAIARALVARRPILLMDEATSALDNENSKVIEALMTNSIDRTTIFISHKIRAATKADRVVVLDHGKVSEQGTHEELLSAGGLYKRLYDAQTEVESSDDEDPIKTITKTPIPTVVEKTEEASGGPQASIAEPSDNLPQIPKRNLLANLWEIAKEQRRYWPIFLIGLVACVVTAQIFPVQAILLGRVMQVFQGPPEKVSSDANFWSLMFFVVGLGAMISYAILGFFMTLLGVYLTRFYRLEYFRAVLQQPVEFFDRVASGTLLSRLSSDPSNLHELISINMGLLISIFVSVISASIIGLAYSWKFALVAIFAAMPAVFAAGYLRMKLDSSLAEEMEKISEESARFVSDSLSAFRTVKAFTMETAVHHMYNECLVSFAGRLYRQRAVMTLFFAFSESVELLASALGFWYGGKLMGDGELSTEKFFTVFIAVVVGGQAAGALFGFSSNLGKAKIAANNILGIRSQVRAAAARDQSRQMAEENHSEKTENTVVDMQNVTFAYPARPNVPVLKGISFKVYRGQTVGVVGTSGSGKSTLLALLERFYEAQSGTVNVLGRPISAHDIDEYRKRLAIVPQEPQLYNGTVRDNVILGLDEDKVQEADVATACEAAGLGEFISSLPDGFNTQCRGQGVSFSGGQKQRVAIARALIMHPELLLLDEPTSALDAESEQLVRETLGNIQEGRTMILVTHRLNIVRNAHVIIVMDGGRIVEQGTHTELMAKQGNYFKMHESSNGGEA.

The chain crosses the membrane as a helical span at residues isoleucine 41–leucine 61. An ABC transmembrane type-1 1 domain is found at isoleucine 41–lysine 334. Asparagine 67 carries an N-linked (GlcNAc...) asparagine glycan. Helical transmembrane passes span leucine 92–phenylalanine 112, leucine 166–glutamine 186, leucine 190–serine 210, phenylalanine 270–phenylalanine 290, and isoleucine 308–asparagine 328. The ABC transporter 1 domain occupies valine 374–alanine 618. An N-linked (GlcNAc...) asparagine glycan is attached at asparagine 396. An ATP-binding site is contributed by glycine 409–serine 416. Asparagine 463 carries N-linked (GlcNAc...) asparagine glycosylation. A run of 6 helical transmembrane segments spans residues tyrosine 686–valine 706, leucine 734–methionine 754, methionine 808–tyrosine 828, tryptophan 830–leucine 850, valine 913–phenylalanine 933, and phenylalanine 950–phenylalanine 970. The region spanning leucine 691–lysine 976 is the ABC transmembrane type-1 2 domain. 2 N-linked (GlcNAc...) asparagine glycosylation sites follow: asparagine 1007 and asparagine 1021. In terms of domain architecture, ABC transporter 2 spans valine 1017–serine 1255. Glycine 1052–serine 1059 provides a ligand contact to ATP. N-linked (GlcNAc...) asparagine glycosylation occurs at asparagine 1106.

The protein belongs to the ABC transporter superfamily. ABCB family. Multidrug resistance exporter (TC 3.A.1.201) subfamily.

The protein resides in the cell membrane. Its function is as follows. ABC-type transmembrane transporter; part of the gene cluster that mediates the biosynthesis of 11'-deoxyverticillin A, one of the dimeric epipolythiodioxopiperazines (ETPs) from the verticillin family that are toxic secondary metabolites. The verA multidrug transporter is probably involved in the secretion of 11'-deoxyverticillin A. The polypeptide is ABC-type transmembrane transporter verA (Clonostachys rogersoniana).